The sequence spans 166 residues: Regulatory protein RecX (166 aa).

The protein belongs to the RecX family.

It localises to the cytoplasm. Its function is as follows. Modulates RecA activity. The protein is Regulatory protein RecX of Escherichia coli O7:K1 (strain IAI39 / ExPEC).